Here is a 470-residue protein sequence, read N- to C-terminus: Uronate isomerase (470 aa).

The protein belongs to the metallo-dependent hydrolases superfamily. Uronate isomerase family.

The catalysed reaction is D-glucuronate = D-fructuronate. It carries out the reaction aldehydo-D-galacturonate = keto-D-tagaturonate. Its pathway is carbohydrate metabolism; pentose and glucuronate interconversion. The sequence is that of Uronate isomerase from Salmonella newport (strain SL254).